Here is a 344-residue protein sequence, read N- to C-terminus: Heat-inducible transcription repressor HrcA (344 aa).

It belongs to the HrcA family.

Functionally, negative regulator of class I heat shock genes (grpE-dnaK-dnaJ and groELS operons). Prevents heat-shock induction of these operons. This is Heat-inducible transcription repressor HrcA from Streptococcus pneumoniae (strain Taiwan19F-14).